We begin with the raw amino-acid sequence, 121 residues long: Small ribosomal subunit protein uS13 (121 aa).

Residues 92–121 (RKGLPVRGQRTKTNARTRKGPRKSGVQLKK) are disordered.

Belongs to the universal ribosomal protein uS13 family. As to quaternary structure, part of the 30S ribosomal subunit. Forms a loose heterodimer with protein S19. Forms two bridges to the 50S subunit in the 70S ribosome.

Functionally, located at the top of the head of the 30S subunit, it contacts several helices of the 16S rRNA. In the 70S ribosome it contacts the 23S rRNA (bridge B1a) and protein L5 of the 50S subunit (bridge B1b), connecting the 2 subunits; these bridges are implicated in subunit movement. Contacts the tRNAs in the A and P-sites. This Polynucleobacter asymbioticus (strain DSM 18221 / CIP 109841 / QLW-P1DMWA-1) (Polynucleobacter necessarius subsp. asymbioticus) protein is Small ribosomal subunit protein uS13.